Reading from the N-terminus, the 511-residue chain is Ribosome biogenesis protein YTM1 (511 aa).

Positions 9–112 (VKVVFVTRDE…EVSLSIEYIR (104 aa)) are ubiquitin-like (UBL) domain. Residues 122 to 511 (SFSNPDWVAA…IQINNNPQSA (390 aa)) are sufficient for interaction with ERB1 and association with 66S pre-ribosomes. 7 WD repeats span residues 124 to 168 (SNPD…TGQL), 170 to 208 (GHNS…YRRK), 248 to 287 (GHTA…MPAI), 332 to 372 (GHSA…AVQS), 383 to 423 (TRST…QVAT), 429 to 470 (GHTN…SLHV), and 477 to 511 (TENN…PQSA). A disordered region spans residues 207-228 (RKEPGQVGKKELNYDSEEDSDE). Residues 208-219 (KEPGQVGKKELN) are compositionally biased toward basic and acidic residues.

This sequence belongs to the WD repeat WDR12/YTM1 family. As to quaternary structure, component of the NOP7 complex, composed of ERB1, NOP7 and YTM1. The complex is held together by ERB1, which interacts with NOP7 via its N-terminal domain and with YTM1 via a high-affinity interaction between the seven-bladed beta-propeller domains of the 2 proteins. The NOP7 complex associates with the 66S pre-ribosome. Interacts (via UBL domain) with MDN1 (via VWFA/MIDAS domain).

It is found in the nucleus. Its subcellular location is the nucleolus. The protein localises to the nucleoplasm. Component of the NOP7 complex, which is required for maturation of the 25S and 5.8S ribosomal RNAs and formation of the 60S ribosome. This chain is Ribosome biogenesis protein YTM1, found in Yarrowia lipolytica (strain CLIB 122 / E 150) (Yeast).